The chain runs to 443 residues: UDP-N-acetylmuramoylalanine--D-glutamate ligase (443 aa).

ATP is bound at residue Gly-116–Thr-122.

It belongs to the MurCDEF family.

Its subcellular location is the cytoplasm. It carries out the reaction UDP-N-acetyl-alpha-D-muramoyl-L-alanine + D-glutamate + ATP = UDP-N-acetyl-alpha-D-muramoyl-L-alanyl-D-glutamate + ADP + phosphate + H(+). The protein operates within cell wall biogenesis; peptidoglycan biosynthesis. Its function is as follows. Cell wall formation. Catalyzes the addition of glutamate to the nucleotide precursor UDP-N-acetylmuramoyl-L-alanine (UMA). The polypeptide is UDP-N-acetylmuramoylalanine--D-glutamate ligase (Novosphingobium aromaticivorans (strain ATCC 700278 / DSM 12444 / CCUG 56034 / CIP 105152 / NBRC 16084 / F199)).